We begin with the raw amino-acid sequence, 277 residues long: Probable ketoamine kinase HMPREF0351_12196 (277 aa).

An ATP-binding site is contributed by 84–86 (EWI). Residue Asp186 is the Proton acceptor of the active site.

The protein belongs to the fructosamine kinase family.

It catalyses the reaction N(6)-(D-ribulosyl)-L-lysine + ATP = N(6)-(3-O-phospho-D-ribulosyl)-L-lysine + ADP + H(+). The catalysed reaction is N-(D-ribulosyl)-cadaverine + ATP = N-(3-O-phospho-D-ribulosyl)-cadaverine + ADP + H(+). The enzyme catalyses N(6)-(D-erythrulosyl)-L-lysine + ATP = N(6)-(3-O-phospho-D-erythrulosyl)-L-lysine + ADP + H(+). It carries out the reaction N-(D-erythrulosyl)-cadaverine + ATP = N-(3-O-phospho-D-erythrulosyl)-cadaverine + ADP + H(+). It catalyses the reaction N(6)-D-ribulosyl-L-lysyl-[protein] + ATP = N(6)-(3-O-phospho-D-ribulosyl)-L-lysyl-[protein] + ADP + H(+). The catalysed reaction is N(6)-(D-erythrulosyl)-L-lysyl-[protein] + ATP = N(6)-(3-O-phospho-D-erythrulosyl)-L-lysyl-[protein] + ADP + H(+). Its function is as follows. Ketoamine kinase that phosphorylates ketoamines, such as erythruloselysine, erythrulosecadaverine, ribuloselysine and ribulosecadaverine, on the third carbon of the sugar moiety to generate ketoamine 3-phosphate. Has higher activity on free lysine (erythruloselysine and ribuloselysine), than on ribuloselysine and erythruloselysine residues on glycated proteins. This is Probable ketoamine kinase HMPREF0351_12196 from Enterococcus faecium (strain ATCC BAA-472 / TX0016 / DO).